We begin with the raw amino-acid sequence, 25 residues long: Small ribosomal subunit protein eS32A (25 aa).

A disordered region spans residues 1–25; the sequence is MRDKWRKKRVRRLKRKRRKMRARSK.

Belongs to the eukaryotic ribosomal protein eS32 family. Component of the large ribosomal subunit (LSU). Mature yeast ribosomes consist of a small (40S) and a large (60S) subunit. The 40S small subunit contains 1 molecule of ribosomal RNA (18S rRNA) and at least 33 different proteins. The large 60S subunit contains 3 rRNA molecules (25S, 5.8S and 5S rRNA) and at least 46 different proteins.

It is found in the cytoplasm. The protein resides in the nucleus. Component of the ribosome, a large ribonucleoprotein complex responsible for the synthesis of proteins in the cell. The small ribosomal subunit (SSU) binds messenger RNAs (mRNAs) and translates the encoded message by selecting cognate aminoacyl-transfer RNA (tRNA) molecules. The large subunit (LSU) contains the ribosomal catalytic site termed the peptidyl transferase center (PTC), which catalyzes the formation of peptide bonds, thereby polymerizing the amino acids delivered by tRNAs into a polypeptide chain. The nascent polypeptides leave the ribosome through a tunnel in the LSU and interact with protein factors that function in enzymatic processing, targeting, and the membrane insertion of nascent chains at the exit of the ribosomal tunnel. The chain is Small ribosomal subunit protein eS32A (rpl4101) from Schizosaccharomyces pombe (strain 972 / ATCC 24843) (Fission yeast).